Reading from the N-terminus, the 564-residue chain is Phenylalanine--tRNA ligase beta subunit (564 aa).

The 77-residue stretch at 286–362 (YFQNSLKINV…IGKGLDNFKS (77 aa)) folds into the B5 domain. The Mg(2+) site is built by Asp340, Asp346, Glu349, and Glu350.

Belongs to the phenylalanyl-tRNA synthetase beta subunit family. Type 2 subfamily. As to quaternary structure, tetramer of two alpha and two beta subunits. It depends on Mg(2+) as a cofactor.

The protein resides in the cytoplasm. It catalyses the reaction tRNA(Phe) + L-phenylalanine + ATP = L-phenylalanyl-tRNA(Phe) + AMP + diphosphate + H(+). The chain is Phenylalanine--tRNA ligase beta subunit from Borrelia duttonii (strain Ly).